The sequence spans 153 residues: MSQARTLHRLIAPAVEALGFELVGCELFRRGATTILQVFVDKPGGIGLDECAKVSRQISAVLDVEDPIRGRYTLEVSSPGLERPLYTANHYRRFIGNKAKIRLREPREGQRQFRGMIVAVDNEEQVTLQLDNKILKVPLGEIEKANLIADFEG.

The protein belongs to the RimP family.

Its subcellular location is the cytoplasm. Functionally, required for maturation of 30S ribosomal subunits. This is Ribosome maturation factor RimP from Coxiella burnetii (strain CbuK_Q154) (Coxiella burnetii (strain Q154)).